Reading from the N-terminus, the 411-residue chain is MDKLLDRFFNYVSFDTQAKANVKSVPSTQGQRKLAQALQQELLTLGFSHVTLSDHGCVMATLPANVSWPVPTIGFIAHLDTSPDFSGKNVNPQIVENYRGGDIALGIGDEVLSPVMFPVLHQLLGHTLITTDGKTLLGADDKAGIAEIITAMVRLKHRNVPHGDIRIAFTPDEEVGKGAQFFNVAEFDAQWAYTVDGGGIGELEFENFNAASVAIKIVGNNVHPGSAKGVMVNALSLATRYHQELPVDETPEYTEGYDGFYHLQSIKGTVERAEMHYIVRDFNRDSFEARKKNMVDIAKRVGKGLHRDCYIEIVIDDSYYNMREQIIKHPHIIELAQQAMLDCDITPIMKPIRGGTDGAQLSFKGLPCPNIFTGGYNYHGKHEFITLEGMEKAVAVIMRISELTAKRAKES.

Zn(2+) is bound at residue His-78. Residue Asp-80 is part of the active site. A Zn(2+)-binding site is contributed by Asp-140. Catalysis depends on Glu-173, which acts as the Proton acceptor. 3 residues coordinate Zn(2+): Glu-174, Asp-196, and His-379.

This sequence belongs to the peptidase M20B family. Zn(2+) serves as cofactor.

The protein localises to the cytoplasm. The enzyme catalyses Release of the N-terminal residue from a tripeptide.. Its function is as follows. Cleaves the N-terminal amino acid of tripeptides. This is Peptidase T from Yersinia pseudotuberculosis serotype O:3 (strain YPIII).